Consider the following 119-residue polypeptide: Circadian clock oscillator protein KaiB (119 aa).

It belongs to the KaiB family. In terms of assembly, the KaiABC complex composition changes during the circadian cycle to control KaiC phosphorylation. Complexes KaiC(6), KaiA(2-4):KaiC(6), KaiB(6):KaiC(6) and KaiC(6):KaiB(6):KaiA(12) are among the most important forms, many form cooperatively. Undergoes a major conformational rearrangment; in the free state forms homotetramers as a dimer of dimers. When bound to the CI domain of KaiC switches to a monomeric thioredoxin-fold (KaiB(fs)). KaiB(fs) binds CikA, leading it to dephosphorylate phospho-RpaA.

Functionally, key component of the KaiABC oscillator complex, which constitutes the main circadian regulator in cyanobacteria. Complex composition changes during the circadian cycle to control KaiC phosphorylation. KaiA stimulates KaiC autophosphorylation, while KaiB sequesters KaiA, leading to KaiC autodephosphorylation. Phospho-Ser-431 KaiC accumulation triggers binding of KaiB to form the KaiB(6):KaiC(6) complex, leading to changes in output regulators CikA and SasA. KaiB switches to a thioredoxin-like fold (KaiB(fs)) when bound to KaiC. KaiB(6):KaiC(6) formation exposes a site for KaiA binding that sequesters KaiA from KaiC, making the KaiC(6):KaiB(6):KaiA(12) complex that results in KaiC autodephosphorylation. Its function is as follows. A metamorphic protein which reversibly switches between an inactive tetrameric fold and a rare, thioredoxin-like monomeric fold (KaiB(fs)). KaiB(fs) binds phospho-KaiC, KaiA and CikA. KaiA and CikA compete for binding to KaiB(fs), and KaiB(fs) and SasA compete for binding to KaiC, thus the clock oscillator and output signal pathway are tightly coupled. The sequence is that of Circadian clock oscillator protein KaiB from Synechococcus sp. (strain CC9311).